Consider the following 238-residue polypeptide: Small ribosomal subunit protein uS2 (238 aa).

This sequence belongs to the universal ribosomal protein uS2 family.

The polypeptide is Small ribosomal subunit protein uS2 (Chloroflexus aggregans (strain MD-66 / DSM 9485)).